We begin with the raw amino-acid sequence, 171 residues long: S-ribosylhomocysteine lyase (171 aa).

3 residues coordinate Fe cation: H54, H58, and C128.

It belongs to the LuxS family. Homodimer. Requires Fe cation as cofactor.

The enzyme catalyses S-(5-deoxy-D-ribos-5-yl)-L-homocysteine = (S)-4,5-dihydroxypentane-2,3-dione + L-homocysteine. Involved in the synthesis of autoinducer 2 (AI-2) which is secreted by bacteria and is used to communicate both the cell density and the metabolic potential of the environment. The regulation of gene expression in response to changes in cell density is called quorum sensing. Catalyzes the transformation of S-ribosylhomocysteine (RHC) to homocysteine (HC) and 4,5-dihydroxy-2,3-pentadione (DPD). The chain is S-ribosylhomocysteine lyase from Salmonella agona (strain SL483).